A 304-amino-acid polypeptide reads, in one-letter code: MSAKSKGNPSSSSAAEGPPAASKTKVKEQIKIIVEDLELVLGDLKDVAKELKEVVDQIDTLTSDLQLEDEMTDSSKTDTLNSSSSGTTASSIEKIKEQANAPLIKPPAHPSAILTVLRKPNPPPPPPRLTPVRCEEPQRVVPTANPVKTNGTLLRNGGLAGRPNKIPNGDICCIPNSNLDKAPLQSLMHRPEKDRSPQAGPRERVRFNEKVQYHGYCPDCESRYNIKNREVHLHSEPVHPPGKIPHQGPLLHPPPHLPNFPLENGGLGISHSNSFPPPTPATVPPPAAPKPQKTILRKSTTTTV.

Residues 1-22 (MSAKSKGNPSSSSAAEGPPAAS) are compositionally biased toward low complexity. Disordered stretches follow at residues 1–27 (MSAK…TKVK), 66–109 (QLED…PPAH), 114–133 (LTVL…TPVR), and 236–304 (EPVH…TTTV). Residues 33 to 70 (IVEDLELVLGDLKDVAKELKEVVDQIDTLTSDLQLEDE) adopt a coiled-coil conformation. Residues 77–91 (TDTLNSSSSGTTASS) show a composition bias toward low complexity. 2 stretches are compositionally biased toward pro residues: residues 120-129 (PNPPPPPPRL) and 275-289 (FPPP…PAAP).

Functionally, regulator of cell size that promotes cell size increase independently of mTOR and Hippo signaling pathways. Acts by stimulating the translation of specific mRNAs, including those encoding proteins affecting mitochondrial functions. Increases mitochondrial mass and respiration. In Mus musculus (Mouse), this protein is Protein Largen (Prr16).